The sequence spans 247 residues: Triosephosphate isomerase (247 aa).

Substrate-binding residues include N10 and K12. Catalysis depends on H94, which acts as the Electrophile. The active-site Proton acceptor is the E164.

The protein belongs to the triosephosphate isomerase family. In terms of assembly, homodimer.

It localises to the cytoplasm. The enzyme catalyses D-glyceraldehyde 3-phosphate = dihydroxyacetone phosphate. It catalyses the reaction dihydroxyacetone phosphate = methylglyoxal + phosphate. Its pathway is carbohydrate biosynthesis; gluconeogenesis. The protein operates within carbohydrate degradation; glycolysis; D-glyceraldehyde 3-phosphate from glycerone phosphate: step 1/1. Functionally, triosephosphate isomerase is an extremely efficient metabolic enzyme that catalyzes the interconversion between dihydroxyacetone phosphate (DHAP) and D-glyceraldehyde-3-phosphate (G3P) in glycolysis and gluconeogenesis. It is also responsible for the non-negligible production of methylglyoxal a reactive cytotoxic side-product that modifies and can alter proteins, DNA and lipids. In Latimeria chalumnae (Coelacanth), this protein is Triosephosphate isomerase.